The primary structure comprises 72 residues: Translation initiation factor IF-1 (72 aa).

An S1-like domain is found at 1-72 (MSKEDHIEME…SKARITFRHR (72 aa)).

Belongs to the IF-1 family. As to quaternary structure, component of the 30S ribosomal translation pre-initiation complex which assembles on the 30S ribosome in the order IF-2 and IF-3, IF-1 and N-formylmethionyl-tRNA(fMet); mRNA recruitment can occur at any time during PIC assembly.

The protein resides in the cytoplasm. In terms of biological role, one of the essential components for the initiation of protein synthesis. Stabilizes the binding of IF-2 and IF-3 on the 30S subunit to which N-formylmethionyl-tRNA(fMet) subsequently binds. Helps modulate mRNA selection, yielding the 30S pre-initiation complex (PIC). Upon addition of the 50S ribosomal subunit IF-1, IF-2 and IF-3 are released leaving the mature 70S translation initiation complex. In Methylococcus capsulatus (strain ATCC 33009 / NCIMB 11132 / Bath), this protein is Translation initiation factor IF-1.